We begin with the raw amino-acid sequence, 843 residues long: Eisosome protein 1 (843 aa).

A disordered region spans residues 1 to 53 (MSLISAVEDRDIHNIGKTSGGGSRTSSITSSKKSLKHGSKSLRKPKVYQTTGE). Residue Ser-2 is modified to N-acetylserine. At Ser-2 the chain carries Phosphoserine. A compositionally biased stretch (basic residues) spans 33-46 (KSLKHGSKSLRKPK). 2 positions are modified to phosphoserine: Ser-88 and Ser-130. The disordered stretch occupies residues 120–174 (KMGPKVVRNNSITSATSKTSKESQTKRKSKESPGAAASKAYSMTMETTSLSSQTN). Composition is skewed to polar residues over residues 127–137 (RNNSITSATSK) and 163–174 (TMETTSLSSQTN). Ser-182, Ser-401, Ser-584, and Ser-710 each carry phosphoserine. The segment at 717–843 (DLPTQLEKIE…QDAISNQEKK (127 aa)) is disordered. Thr-720 carries the post-translational modification Phosphothreonine. Residues 752-764 (STAAKEATETSSA) show a composition bias toward low complexity. A phosphoserine mark is found at Ser-763 and Ser-775. Residues 781–797 (SGKEDANDCKSAEHSKE) show a composition bias toward basic and acidic residues. Polar residues predominate over residues 798–810 (ISVSQKAGNNKSL). 4 positions are modified to phosphoserine: Ser-816, Ser-828, Ser-829, and Ser-838.

The protein belongs to the EIS1 family.

The protein resides in the cytoplasmic granule. Its subcellular location is the cell membrane. Its function is as follows. Required for normal formation of eisosomes, large cytoplasmic protein assemblies that localize to specialized domains on plasma membrane and mark the site of endocytosis. The chain is Eisosome protein 1 (EIS1) from Saccharomyces cerevisiae (strain ATCC 204508 / S288c) (Baker's yeast).